The chain runs to 310 residues: Small ribosomal subunit biogenesis GTPase RsgA (310 aa).

The region spanning L77–F238 is the CP-type G domain. Residues N126–D129 and G180–T188 contribute to the GTP site. The Zn(2+) site is built by C262, C267, H269, and C275.

It belongs to the TRAFAC class YlqF/YawG GTPase family. RsgA subfamily. As to quaternary structure, monomer. Associates with 30S ribosomal subunit, binds 16S rRNA. It depends on Zn(2+) as a cofactor.

It is found in the cytoplasm. Functionally, one of several proteins that assist in the late maturation steps of the functional core of the 30S ribosomal subunit. Helps release RbfA from mature subunits. May play a role in the assembly of ribosomal proteins into the subunit. Circularly permuted GTPase that catalyzes slow GTP hydrolysis, GTPase activity is stimulated by the 30S ribosomal subunit. The protein is Small ribosomal subunit biogenesis GTPase RsgA of Bacteroides fragilis (strain YCH46).